A 774-amino-acid chain; its full sequence is Phosphoribosylformylglycinamidine synthase subunit PurL (774 aa).

The active site involves histidine 51. The ATP site is built by tyrosine 54 and lysine 93. Glutamate 95 is a Mg(2+) binding site. Residues serine 96 to histidine 99 and arginine 118 contribute to the substrate site. Histidine 97 acts as the Proton acceptor in catalysis. Aspartate 119 lines the Mg(2+) pocket. Glutamine 242 contacts substrate. Aspartate 270 contributes to the Mg(2+) binding site. Glutamate 314–glutamine 316 contacts substrate. Aspartate 514 and glycine 551 together coordinate ATP. Asparagine 552 lines the Mg(2+) pocket. Substrate is bound at residue serine 554.

This sequence belongs to the FGAMS family. In terms of assembly, monomer. Part of the FGAM synthase complex composed of 1 PurL, 1 PurQ and 2 PurS subunits.

The protein localises to the cytoplasm. The enzyme catalyses N(2)-formyl-N(1)-(5-phospho-beta-D-ribosyl)glycinamide + L-glutamine + ATP + H2O = 2-formamido-N(1)-(5-O-phospho-beta-D-ribosyl)acetamidine + L-glutamate + ADP + phosphate + H(+). Its pathway is purine metabolism; IMP biosynthesis via de novo pathway; 5-amino-1-(5-phospho-D-ribosyl)imidazole from N(2)-formyl-N(1)-(5-phospho-D-ribosyl)glycinamide: step 1/2. In terms of biological role, part of the phosphoribosylformylglycinamidine synthase complex involved in the purines biosynthetic pathway. Catalyzes the ATP-dependent conversion of formylglycinamide ribonucleotide (FGAR) and glutamine to yield formylglycinamidine ribonucleotide (FGAM) and glutamate. The FGAM synthase complex is composed of three subunits. PurQ produces an ammonia molecule by converting glutamine to glutamate. PurL transfers the ammonia molecule to FGAR to form FGAM in an ATP-dependent manner. PurS interacts with PurQ and PurL and is thought to assist in the transfer of the ammonia molecule from PurQ to PurL. The sequence is that of Phosphoribosylformylglycinamidine synthase subunit PurL from Gloeobacter violaceus (strain ATCC 29082 / PCC 7421).